A 146-amino-acid chain; its full sequence is Hemoglobin subunit beta (146 aa).

The residue at position 1 (valine 1) is an N-acetylvaline. The Globin domain occupies 2 to 146 (NLTAAEKTQV…VANALAHKYH (145 aa)). Residue threonine 12 is modified to Phosphothreonine. Position 59 is an N6-acetyllysine (lysine 59). A heme b-binding site is contributed by histidine 63. N6-acetyllysine is present on lysine 82. Heme b is bound at residue histidine 92. Residue cysteine 93 is modified to S-nitrosocysteine. The residue at position 144 (lysine 144) is an N6-acetyllysine.

Belongs to the globin family. As to quaternary structure, heterotetramer of two alpha chains and two beta chains. As to expression, red blood cells.

Functionally, involved in oxygen transport from the lung to the various peripheral tissues. The protein is Hemoglobin subunit beta (HBB) of Loxodonta africana (African elephant).